The chain runs to 319 residues: Ubiquinone biosynthesis protein COQ4, mitochondrial (319 aa).

A mitochondrion-targeting transit peptide spans 1–28; it reads MISRSIFSKSVSLQRSQNRSFLLTAASA. Residues His-205, Asp-206, His-209, and Glu-221 each contribute to the Zn(2+) site.

The protein belongs to the COQ4 family. In terms of assembly, component of a multi-subunit COQ enzyme complex, composed of at least COQ3, COQ4, COQ5, COQ6, COQ7 and COQ9. Zn(2+) is required as a cofactor.

The protein resides in the mitochondrion inner membrane. The enzyme catalyses a 4-hydroxy-3-methoxy-5-(all-trans-polyprenyl)benzoate + H(+) = a 2-methoxy-6-(all-trans-polyprenyl)phenol + CO2. Its pathway is cofactor biosynthesis; ubiquinone biosynthesis. In terms of biological role, lyase that catalyzes the C1-decarboxylation of 4-hydroxy-3-methoxy-5-(all-trans-polyprenyl)benzoic acid into 2-methoxy-6-(all-trans-polyprenyl)phenol during ubiquinone biosynthesis. This is Ubiquinone biosynthesis protein COQ4, mitochondrial from Clavispora lusitaniae (strain ATCC 42720) (Yeast).